A 204-amino-acid polypeptide reads, in one-letter code: Probable UMP-CMP kinase 1 (204 aa).

31 to 36 (GSGKGT) serves as a coordination point for ATP. Positions 51-80 (SAGDLLRAEIKSGSEFGAMIQSMIAEGRIV) are NMP. A ribonucleoside 5'-phosphate is bound by residues R57, 78-80 (RIV), and 105-108 (GFPR). N112 is a CMP binding site. Positions 143–151 (SRNQGREDD) are LID. Residue R144 coordinates ATP. A ribonucleoside 5'-phosphate-binding residues include R148 and R159. K187 is a binding site for ATP.

This sequence belongs to the adenylate kinase family. UMP-CMP kinase subfamily. As to quaternary structure, monomer. The cofactor is Mg(2+).

Its subcellular location is the cytoplasm. The protein resides in the nucleus. The enzyme catalyses CMP + ATP = CDP + ADP. It carries out the reaction dCMP + ATP = dCDP + ADP. The catalysed reaction is UMP + ATP = UDP + ADP. Its function is as follows. Catalyzes the phosphorylation of pyrimidine nucleoside monophosphates at the expense of ATP. Plays an important role in de novo pyrimidine nucleotide biosynthesis. Has preference for UMP and CMP as phosphate acceptors. This is Probable UMP-CMP kinase 1 (UMK1) from Arabidopsis thaliana (Mouse-ear cress).